The primary structure comprises 666 residues: Non-receptor tyrosine-protein kinase TNK1 (666 aa).

S96 carries the post-translational modification Phosphoserine. Residues 116–383 (VRRGELLGSG…LEGLLQEAWL (268 aa)) form the Protein kinase domain. Residues 122–130 (LGSGCFGVV) and K148 contribute to the ATP site. The active-site Proton acceptor is D245. The residue at position 255 (S255) is a Phosphoserine. The SH3 domain maps to 381 to 441 (AWLSEGRCVR…PASAVTLADL (61 aa)). The disordered stretch occupies residues 442–589 (GGSPVTHPAH…VPSGGPLSDP (148 aa)). Residues 457–473 (HGEKCRGGTDGDREKAT) are compositionally biased toward basic and acidic residues. At S498 the chain carries Phosphoserine. Position 510 is a phosphothreonine (T510). S515 carries the phosphoserine modification. Residues 531–544 (DLPPRPPDLPPRPP) are compositionally biased toward pro residues. S582 is modified (phosphoserine).

Belongs to the protein kinase superfamily. Tyr protein kinase family. As to quaternary structure, interacts with the SH3 domain of PLCG1 via its Pro-rich domain. In terms of processing, autophosphorylated on tyrosine residues. In terms of tissue distribution, expressed in whole embryo and all adult tissues examined including liver, kidney, heart, brain, skeletal muscle and intestine. Also detected in various myeloid- and lymphoid-derived cell lines.

The protein resides in the membrane. The protein localises to the cytoplasm. The enzyme catalyses L-tyrosyl-[protein] + ATP = O-phospho-L-tyrosyl-[protein] + ADP + H(+). Functionally, may function in signaling pathways utilized broadly during fetal development and more selectively in adult tissues and in cells of the lymphohematopoietic system. Could specifically be involved in phospholipid signal transduction. Involved in negative regulation of cell growth. Has tumor suppressor properties. Plays a negative regulatory role in the Ras-MAPK pathway. This is Non-receptor tyrosine-protein kinase TNK1 from Mus musculus (Mouse).